Here is a 155-residue protein sequence, read N- to C-terminus: Small ribosomal subunit protein uS7c (155 aa).

Belongs to the universal ribosomal protein uS7 family. In terms of assembly, part of the 30S ribosomal subunit.

The protein resides in the plastid. The protein localises to the chloroplast. One of the primary rRNA binding proteins, it binds directly to 16S rRNA where it nucleates assembly of the head domain of the 30S subunit. The protein is Small ribosomal subunit protein uS7c (rps7) of Aristolochia macrophylla (Dutchman's pipe vine).